The chain runs to 275 residues: 2-C-methyl-D-erythritol 4-phosphate cytidylyltransferase (275 aa).

Belongs to the IspD/TarI cytidylyltransferase family. IspD subfamily.

It carries out the reaction 2-C-methyl-D-erythritol 4-phosphate + CTP + H(+) = 4-CDP-2-C-methyl-D-erythritol + diphosphate. Its pathway is isoprenoid biosynthesis; isopentenyl diphosphate biosynthesis via DXP pathway; isopentenyl diphosphate from 1-deoxy-D-xylulose 5-phosphate: step 2/6. In terms of biological role, catalyzes the formation of 4-diphosphocytidyl-2-C-methyl-D-erythritol from CTP and 2-C-methyl-D-erythritol 4-phosphate (MEP). This chain is 2-C-methyl-D-erythritol 4-phosphate cytidylyltransferase, found in Corynebacterium jeikeium (strain K411).